The following is a 275-amino-acid chain: Rhamnulose-1-phosphate aldolase (275 aa).

Glutamate 117 is an active-site residue. Histidine 141, histidine 143, and histidine 212 together coordinate Zn(2+).

The protein belongs to the aldolase class II family. RhaD subfamily. In terms of assembly, homotetramer. It depends on Zn(2+) as a cofactor.

The protein localises to the cytoplasm. The enzyme catalyses L-rhamnulose 1-phosphate = (S)-lactaldehyde + dihydroxyacetone phosphate. It functions in the pathway carbohydrate degradation; L-rhamnose degradation; glycerone phosphate from L-rhamnose: step 3/3. Catalyzes the reversible cleavage of L-rhamnulose-1-phosphate to dihydroxyacetone phosphate (DHAP) and L-lactaldehyde. This Salmonella dublin (strain CT_02021853) protein is Rhamnulose-1-phosphate aldolase.